The primary structure comprises 765 residues: MTNRISRLKTALFANTREISLERALLYTASHRQTEGEPVILRRAKATAYILEHVEISIRDEELIAGNRTVKPRAGIMSPEMDPYWLLKELDQFPTRPQDRFAISEEDKRIYREELFPYWEKRSMKDFINGQMTDEVKAATNTQIFSINQTDKGQGHIIIDYPRLLNHGLGELVAQMQQHCQQQPENHFYQAALLLLEASQKHILRYAELAETMAANCTDAQRREELLTIAEISRHNAQHKPQTFWQACQLFWYMNIILQYESNASSLSLGRFDQYMLPFYQTSLTQGEDAAFLKELLESLWVKCNDIVLLRSTSSARYFAGFPTGYTALLGGLTENGRSAVNVLSFLCLDAYQSVQLPQPNLGVRTNALIDTPFLMKTAETIRFGTGIPQIFNDEVVVPAFLNRGVSLEDARDYSVVGCVELSIPGRTYGLHDIAMFNLLKVMEICLHENEGNAALTYEGLLEQIRAKISHYITLMVEGSNICDIGHRDWAPVPLLSSFISDCLEKGRDITDGGARYNFSGVQGIGIANLSDSLHALKGMVFEQQRLSFDELLSVLKANFATPEGEKVRARLINRFEKYGNDIDEVDNISAELLRHYCKEVEKYQNPRGGYFTPGSYTVSAHVPLGSVVGATPDGRFAGEQLADGGLSPMLGQDAQGPTAVLKSVSKLDNTLLSNGTLLNVKFTPATLEGEAGLRKLADFLRAFTQLKLQHIQFNVVNADTLREAQQRPQDYAGLVVRVAGYSAFFVELSKEIQDDIIRRTAHQL.

Residues 3-637 (NRISRLKTAL…VVGATPDGRF (635 aa)) enclose the PFL domain. A Glycine radical domain is found at 645 to 765 (GGLSPMLGQD…DIIRRTAHQL (121 aa)). Residue Gly-741 is modified to Glycine radical.

Belongs to the glycyl radical enzyme (GRE) family.

Functionally, probably shows dehydratase activity. This chain is Probable dehydratase PflD (pflD), found in Escherichia coli (strain K12).